A 512-amino-acid polypeptide reads, in one-letter code: Alpha-amylase 1 (512 aa).

An N-terminal signal peptide occupies residues M1–A25. An intrachain disulfide couples C66 to C74. Substrate is bound at residue W119. N157 is a binding site for Ca(2+). H158 provides a ligand contact to substrate. C186 and C200 form a disulfide bridge. Residues E198 and D211 each coordinate Ca(2+). N233 carries an N-linked (GlcNAc...) asparagine glycan. A substrate-binding site is contributed by R240. Ca(2+) is bound by residues D242, H246, and E266. Residue D242 is the Nucleophile of the active site. K245–H246 is a binding site for substrate. Residue E266 is the Proton donor of the active site. A substrate-binding site is contributed by G270. C276 and C319 form a disulfide bridge. Substrate contacts are provided by D333 and R380. An intrachain disulfide couples C475 to C510.

Belongs to the glycosyl hydrolase 13 family. Ca(2+) is required as a cofactor.

It is found in the secreted. It catalyses the reaction Endohydrolysis of (1-&gt;4)-alpha-D-glucosidic linkages in polysaccharides containing three or more (1-&gt;4)-alpha-linked D-glucose units.. With respect to regulation, alpha-amylase expression underlies catabolite repression by glucose. The chain is Alpha-amylase 1 (AMY1) from Schwanniomyces occidentalis (Yeast).